A 391-amino-acid chain; its full sequence is Putative penicillin-binding protein PbpX (391 aa).

Residues glycine 21–leucine 40 traverse the membrane as a helical segment. The segment at serine 44–glutamine 76 is disordered. Residues serine 50–threonine 59 show a composition bias toward polar residues.

It belongs to the beta-lactamase family.

It is found in the cell membrane. The sequence is that of Putative penicillin-binding protein PbpX (pbpX) from Bacillus subtilis (strain 168).